The following is a 447-amino-acid chain: Signal recognition particle 54 kDa protein (447 aa).

GTP-binding positions include Gly103–Thr110, Asp185–Arg189, and Thr245–Asp248.

The protein belongs to the GTP-binding SRP family. SRP54 subfamily. Part of the signal recognition particle protein translocation system, which is composed of SRP and FtsY. Archaeal SRP consists of a 7S RNA molecule of 300 nucleotides and two protein subunits: SRP54 and SRP19.

Its subcellular location is the cytoplasm. The enzyme catalyses GTP + H2O = GDP + phosphate + H(+). Functionally, involved in targeting and insertion of nascent membrane proteins into the cytoplasmic membrane. Binds to the hydrophobic signal sequence of the ribosome-nascent chain (RNC) as it emerges from the ribosomes. The SRP-RNC complex is then targeted to the cytoplasmic membrane where it interacts with the SRP receptor FtsY. The chain is Signal recognition particle 54 kDa protein from Saccharolobus islandicus (strain L.S.2.15 / Lassen #1) (Sulfolobus islandicus).